Consider the following 169-residue polypeptide: MPDVDRFGRLPWLWITVLVFVLDQVSKAFFQAELSMYQQIVVIPDLFSWTLAYNTGAAFSFLADSSGWQRWLFALIAIVVSASLVVWLKRLKKGETWLAIALALVLGGALGNLYDRMVLGHVVDFILVHWQNRWYFPAFNLADSAITVGAVMLALDMFRSKKSGEAAHG.

The Cytoplasmic portion of the chain corresponds to 1 to 9; sequence MPDVDRFGR. A helical membrane pass occupies residues 10-30; that stretch reads LPWLWITVLVFVLDQVSKAFF. Topologically, residues 31–67 are periplasmic; the sequence is QAELSMYQQIVVIPDLFSWTLAYNTGAAFSFLADSSG. Residues 68-89 traverse the membrane as a helical segment; it reads WQRWLFALIAIVVSASLVVWLK. At 90 to 96 the chain is on the cytoplasmic side; the sequence is RLKKGET. A helical membrane pass occupies residues 97–118; the sequence is WLAIALALVLGGALGNLYDRMV. Residues 119–140 are Periplasmic-facing; that stretch reads LGHVVDFILVHWQNRWYFPAFN. Residues D124 and D143 contribute to the active site. The chain crosses the membrane as a helical span at residues 141–154; sequence LADSAITVGAVMLA. The Cytoplasmic portion of the chain corresponds to 155-169; the sequence is LDMFRSKKSGEAAHG.

Belongs to the peptidase A8 family. In terms of assembly, monomer in the crystal.

It is found in the cell inner membrane. It catalyses the reaction Release of signal peptides from bacterial membrane prolipoproteins. Hydrolyzes -Xaa-Yaa-Zaa-|-(S,diacylglyceryl)Cys-, in which Xaa is hydrophobic (preferably Leu), and Yaa (Ala or Ser) and Zaa (Gly or Ala) have small, neutral side chains.. It participates in protein modification; lipoprotein biosynthesis (signal peptide cleavage). With respect to regulation, inhibited by globomycin. Functionally, this protein specifically catalyzes the removal of signal peptides from prolipoproteins. This is Lipoprotein signal peptidase from Pseudomonas aeruginosa (strain ATCC 15692 / DSM 22644 / CIP 104116 / JCM 14847 / LMG 12228 / 1C / PRS 101 / PAO1).